The following is a 272-amino-acid chain: UPF0759 protein YecE (272 aa).

It belongs to the UPF0759 family.

The protein is UPF0759 protein YecE (yecE) of Escherichia coli O157:H7.